The following is a 339-amino-acid chain: Anthranilate phosphoribosyltransferase (339 aa).

Residues glycine 80, 83-84 (GD), threonine 88, 90-93 (NIST), 108-116 (KHGNRSVSS), and serine 120 contribute to the 5-phospho-alpha-D-ribose 1-diphosphate site. Glycine 80 contributes to the anthranilate binding site. Serine 92 is a binding site for Mg(2+). Anthranilate is bound at residue asparagine 111. Arginine 166 contacts anthranilate. The Mg(2+) site is built by aspartate 225 and glutamate 226.

It belongs to the anthranilate phosphoribosyltransferase family. In terms of assembly, homodimer. It depends on Mg(2+) as a cofactor.

The catalysed reaction is N-(5-phospho-beta-D-ribosyl)anthranilate + diphosphate = 5-phospho-alpha-D-ribose 1-diphosphate + anthranilate. It functions in the pathway amino-acid biosynthesis; L-tryptophan biosynthesis; L-tryptophan from chorismate: step 2/5. In terms of biological role, catalyzes the transfer of the phosphoribosyl group of 5-phosphorylribose-1-pyrophosphate (PRPP) to anthranilate to yield N-(5'-phosphoribosyl)-anthranilate (PRA). This chain is Anthranilate phosphoribosyltransferase, found in Desulfosudis oleivorans (strain DSM 6200 / JCM 39069 / Hxd3) (Desulfococcus oleovorans).